Reading from the N-terminus, the 163-residue chain is MASLSSSINSLFLKEFFGAFFLSMRYFFRQKATINYPFEKGPVSPRFRGEHALRRYPNGEERCIACKLCEAICPAQAITIEAGPRRNDGTRRTVRYDIDMVKCIYCGFCQEACPVDAIVEGPNFEFATETREELYFDKARLLDNGDRWEREIARNIAIDSPYR.

4Fe-4S ferredoxin-type domains follow at residues 53 to 83 (LRRY…IEAG) and 94 to 123 (VRYD…EGPN). Positions 63, 66, 69, 73, 103, 106, 109, and 113 each coordinate [4Fe-4S] cluster.

The protein belongs to the complex I 23 kDa subunit family. NDH-1 is composed of 14 different subunits. Subunits NuoA, H, J, K, L, M, N constitute the membrane sector of the complex. It depends on [4Fe-4S] cluster as a cofactor.

It localises to the cell inner membrane. The catalysed reaction is a quinone + NADH + 5 H(+)(in) = a quinol + NAD(+) + 4 H(+)(out). Its function is as follows. NDH-1 shuttles electrons from NADH, via FMN and iron-sulfur (Fe-S) centers, to quinones in the respiratory chain. The immediate electron acceptor for the enzyme in this species is believed to be ubiquinone. Couples the redox reaction to proton translocation (for every two electrons transferred, four hydrogen ions are translocated across the cytoplasmic membrane), and thus conserves the redox energy in a proton gradient. The protein is NADH-quinone oxidoreductase subunit I 1 of Rhizobium etli (strain ATCC 51251 / DSM 11541 / JCM 21823 / NBRC 15573 / CFN 42).